Consider the following 572-residue polypeptide: MATIGRRAYAEMFGPTAGDRLRLADTDLVVEVEADYTLRAGSYGEEVKFGGGKTIRDGMAQSQKTRAEGAMDTVMTNALIMDHWGIVKADIGLKGGRIAVIGKAGNPDTQPGVDMIIGPGTEIISCEGMIVTAGGIDSHIHFICPQQIEEALTSGVTTMLGGGTGPATGTFATTCTPGPWNIERMLQAADAFPMNLGFLGKGNASLPAALHEQINAGVIGLKLHEDWGTTPAAISNCLDVAEETDTQVAIHSDTLNESGFVENTIAATKGRTLCAFHTEGAGGGHAPDILRVVGEQNFLPSSTNPTMPYTVNTLDEHVDMLMVCHHLDAGIAEDLAFAESRIRKETIAAEDILHDLGAISMFSSDSQAMGRVGEVIIRTWQTAHKMKQQRGKLPGDSDRHDNFRAKRYISKYTINPAIAHGISHEVGSVEPGKWADLVVWKPAFFGIKPSVILKGGFIAMAAMGDPNASIPTPQPVHYRPMFGGFGGAIAKGSLTFVSQAGLNADIQKRFGLAKTLSAVKNIRGVRKQHMIHNDYAPKMEVDAQTYLVRADGLLLTCEPAVSLPMTQRYFLF.

Residues 134–572 (GGIDSHIHFI…LPMTQRYFLF (439 aa)) enclose the Urease domain. Residues His-139, His-141, and Lys-222 each coordinate Ni(2+). The residue at position 222 (Lys-222) is an N6-carboxylysine. A substrate-binding site is contributed by His-224. Ni(2+) contacts are provided by His-251 and His-277. His-325 (proton donor) is an active-site residue. Position 365 (Asp-365) interacts with Ni(2+).

Belongs to the metallo-dependent hydrolases superfamily. Urease alpha subunit family. Heterotrimer of UreA (gamma), UreB (beta) and UreC (alpha) subunits. Three heterotrimers associate to form the active enzyme. Ni cation is required as a cofactor. Post-translationally, carboxylation allows a single lysine to coordinate two nickel ions.

It is found in the cytoplasm. It carries out the reaction urea + 2 H2O + H(+) = hydrogencarbonate + 2 NH4(+). The protein operates within nitrogen metabolism; urea degradation; CO(2) and NH(3) from urea (urease route): step 1/1. This Polaromonas sp. (strain JS666 / ATCC BAA-500) protein is Urease subunit alpha.